Consider the following 206-residue polypeptide: Small ribosomal subunit protein uS4 (206 aa).

Residues 96 to 156 enclose the S4 RNA-binding domain; the sequence is CRLDNVVYRM…EKSKNQLRIA (61 aa).

Belongs to the universal ribosomal protein uS4 family. As to quaternary structure, part of the 30S ribosomal subunit. Contacts protein S5. The interaction surface between S4 and S5 is involved in control of translational fidelity.

Its function is as follows. One of the primary rRNA binding proteins, it binds directly to 16S rRNA where it nucleates assembly of the body of the 30S subunit. With S5 and S12 plays an important role in translational accuracy. The sequence is that of Small ribosomal subunit protein uS4 from Ectopseudomonas mendocina (strain ymp) (Pseudomonas mendocina).